We begin with the raw amino-acid sequence, 349 residues long: UPF0324 inner membrane protein YeiH (349 aa).

Topologically, residues M1 to T12 are periplasmic. Residues M13–A35 traverse the membrane as a helical segment. Residues I36–A38 lie on the Cytoplasmic side of the membrane. Residues V39–V61 form a helical membrane-spanning segment. Over Y62 to D99 the chain is Periplasmic. Residues V100–L122 form a helical membrane-spanning segment. The Cytoplasmic segment spans residues G123 to R131. Residues H132–A151 form a helical membrane-spanning segment. At T152–K162 the chain is on the periplasmic side. A helical membrane pass occupies residues V163–Y185. At P186–K261 the chain is on the cytoplasmic side. Residues I262–P284 traverse the membrane as a helical segment. Residues K285–M290 lie on the Periplasmic side of the membrane. Residues L291–S313 traverse the membrane as a helical segment. Residues A314–P322 are Cytoplasmic-facing. Residues L323 to H345 traverse the membrane as a helical segment. The Periplasmic portion of the chain corresponds to S346–A349.

The protein belongs to the UPF0324 family.

The protein resides in the cell inner membrane. This is UPF0324 inner membrane protein YeiH (yeiH) from Salmonella typhi.